Reading from the N-terminus, the 1224-residue chain is ATP-dependent helicase/deoxyribonuclease subunit B (1224 aa).

In terms of domain architecture, UvrD-like helicase ATP-binding spans 1–326 (MSLRFILGRA…VCAAANRRSE (326 aa)). 8-15 (GRAGTGKS) is an ATP binding site. One can recognise a UvrD-like helicase C-terminal domain in the interval 283–584 (QSAPRFQHPE…KLSLIPPELD (302 aa)). Residues Cys841, Cys1176, Cys1179, and Cys1185 each contribute to the [4Fe-4S] cluster site.

The protein belongs to the helicase family. AddB/RexB type 1 subfamily. As to quaternary structure, heterodimer of AddA and AddB. Mg(2+) serves as cofactor. [4Fe-4S] cluster is required as a cofactor.

In terms of biological role, the heterodimer acts as both an ATP-dependent DNA helicase and an ATP-dependent, dual-direction single-stranded exonuclease. Recognizes the chi site generating a DNA molecule suitable for the initiation of homologous recombination. The AddB subunit has 5' -&gt; 3' nuclease activity but not helicase activity. This is ATP-dependent helicase/deoxyribonuclease subunit B from Heliobacterium modesticaldum (strain ATCC 51547 / Ice1).